A 49-amino-acid chain; its full sequence is Large ribosomal subunit protein bL33 (49 aa).

The protein belongs to the bacterial ribosomal protein bL33 family.

This chain is Large ribosomal subunit protein bL33, found in Syntrophomonas wolfei subsp. wolfei (strain DSM 2245B / Goettingen).